Consider the following 210-residue polypeptide: Cell wall protein SRL1 (210 aa).

Residues 1–19 (MLQSVVFFALLTFASSVSA) form the signal peptide. Asn23 carries N-linked (GlcNAc...) asparagine glycosylation. Disordered regions lie at residues 80 to 99 (SLSTSSASGSVTPESTHEIT) and 118 to 142 (LSPSSTAASVSDEDSNNKDAKVKSF). Residues 118–127 (LSPSSTAASV) are compositionally biased toward low complexity. Positions 132-141 (SNNKDAKVKS) are enriched in basic and acidic residues. 3 N-linked (GlcNAc...) asparagine glycosylation sites follow: Asn174, Asn200, and Asn206.

The protein localises to the secreted. Its subcellular location is the cell wall. The protein resides in the cell surface. Its function is as follows. Required to stabilize the cell wall in the absence of multiple GPI-anchored mannoproteins. The protein is Cell wall protein SRL1 (SRL1) of Saccharomyces cerevisiae (strain ATCC 204508 / S288c) (Baker's yeast).